The chain runs to 640 residues: Threonine--tRNA ligase (640 aa).

The TGS domain occupies 1–61; the sequence is MPIITLPNGD…TEDSTLQIIT (61 aa). The segment at 242-533 is catalytic; it reads DHRKIGKALD…LIEHYAGFMP (292 aa). 3 residues coordinate Zn(2+): Cys333, His384, and His510.

Belongs to the class-II aminoacyl-tRNA synthetase family. In terms of assembly, homodimer. Zn(2+) serves as cofactor.

Its subcellular location is the cytoplasm. The catalysed reaction is tRNA(Thr) + L-threonine + ATP = L-threonyl-tRNA(Thr) + AMP + diphosphate + H(+). Functionally, catalyzes the attachment of threonine to tRNA(Thr) in a two-step reaction: L-threonine is first activated by ATP to form Thr-AMP and then transferred to the acceptor end of tRNA(Thr). Also edits incorrectly charged L-seryl-tRNA(Thr). The protein is Threonine--tRNA ligase of Acinetobacter baumannii (strain AB0057).